Reading from the N-terminus, the 203-residue chain is Large ribosomal subunit protein bL25 (203 aa).

Belongs to the bacterial ribosomal protein bL25 family. CTC subfamily. As to quaternary structure, part of the 50S ribosomal subunit; part of the 5S rRNA/L5/L18/L25 subcomplex. Contacts the 5S rRNA. Binds to the 5S rRNA independently of L5 and L18.

Functionally, this is one of the proteins that binds to the 5S RNA in the ribosome where it forms part of the central protuberance. In Rickettsia prowazekii (strain Madrid E), this protein is Large ribosomal subunit protein bL25.